Here is a 94-residue protein sequence, read N- to C-terminus: Ribonuclease P protein component 1 (94 aa).

The protein belongs to the eukaryotic/archaeal RNase P protein component 1 family. As to quaternary structure, consists of a catalytic RNA component and at least 4-5 protein subunits.

It localises to the cytoplasm. The enzyme catalyses Endonucleolytic cleavage of RNA, removing 5'-extranucleotides from tRNA precursor.. Its function is as follows. Part of ribonuclease P, a protein complex that generates mature tRNA molecules by cleaving their 5'-ends. The polypeptide is Ribonuclease P protein component 1 (Haloarcula marismortui (strain ATCC 43049 / DSM 3752 / JCM 8966 / VKM B-1809) (Halobacterium marismortui)).